We begin with the raw amino-acid sequence, 64 residues long: Small ribosomal subunit protein eS17 (64 aa).

This sequence belongs to the eukaryotic ribosomal protein eS17 family.

The polypeptide is Small ribosomal subunit protein eS17 (Natronomonas pharaonis (strain ATCC 35678 / DSM 2160 / CIP 103997 / JCM 8858 / NBRC 14720 / NCIMB 2260 / Gabara) (Halobacterium pharaonis)).